Consider the following 248-residue polypeptide: ATP synthase subunit a, chloroplastic (248 aa).

The next 5 membrane-spanning stretches (helical) occupy residues 38–58 (QVLI…TLAV), 96–116 (VPFI…GALF), 135–155 (INTT…AGFT), 200–220 (LVVA…VMFL), and 221–241 (GLFT…AYIG).

This sequence belongs to the ATPase A chain family. In terms of assembly, F-type ATPases have 2 components, CF(1) - the catalytic core - and CF(0) - the membrane proton channel. CF(1) has five subunits: alpha(3), beta(3), gamma(1), delta(1), epsilon(1). CF(0) has four main subunits: a, b, b' and c.

It localises to the plastid. The protein localises to the chloroplast thylakoid membrane. Key component of the proton channel; it plays a direct role in the translocation of protons across the membrane. This is ATP synthase subunit a, chloroplastic from Cryptomeria japonica (Japanese cedar).